A 333-amino-acid polypeptide reads, in one-letter code: Transcription factor TGA2.2 (333 aa).

The span at 1–14 shows a compositional bias: polar residues; that stretch reads MADASSRTDTSTVL. Positions 1 to 48 are disordered; the sequence is MADASSRTDTSTVLDTDDKNQMVDGQSGAIVPSNSSDRSDRSDKPMDQ. Basic and acidic residues predominate over residues 37–48; it reads DRSDRSDKPMDQ. The 45-residue stretch at 47–91 folds into the bZIP domain; it reads DQKVLRRLAQNREAARKSRLRKKAYVQQLESSKLKLASLEQEINK. Residues 49-69 form a basic motif region; sequence KVLRRLAQNREAARKSRLRKK. The tract at residues 75–89 is leucine-zipper; that stretch reads LESSKLKLASLEQEI. In terms of domain architecture, DOG1 spans 114 to 330; sequence AMTFDLEYAR…RALSSLWLAR (217 aa).

It belongs to the bZIP family. As to quaternary structure, interacts with NPR1/NH1. Interacts with NPR3/NH3.

It is found in the nucleus. Functionally, transcriptional regulator involved in defense response. The polypeptide is Transcription factor TGA2.2 (Oryza sativa subsp. japonica (Rice)).